Reading from the N-terminus, the 521-residue chain is 2-isopropylmalate synthase (521 aa).

The 263-residue stretch at 12-274 folds into the Pyruvate carboxyltransferase domain; sequence VIIFDTTLRD…WNKIDTTMLT (263 aa). 4 residues coordinate Mn(2+): aspartate 21, histidine 209, histidine 211, and asparagine 245. Residues 398-521 are regulatory domain; that stretch reads KLVSLTVIAG…DMAAPAAAAS (124 aa).

Belongs to the alpha-IPM synthase/homocitrate synthase family. LeuA type 1 subfamily. As to quaternary structure, homodimer. The cofactor is Mn(2+).

It localises to the cytoplasm. It carries out the reaction 3-methyl-2-oxobutanoate + acetyl-CoA + H2O = (2S)-2-isopropylmalate + CoA + H(+). Its pathway is amino-acid biosynthesis; L-leucine biosynthesis; L-leucine from 3-methyl-2-oxobutanoate: step 1/4. Functionally, catalyzes the condensation of the acetyl group of acetyl-CoA with 3-methyl-2-oxobutanoate (2-ketoisovalerate) to form 3-carboxy-3-hydroxy-4-methylpentanoate (2-isopropylmalate). The protein is 2-isopropylmalate synthase of Rhodopseudomonas palustris (strain BisA53).